The chain runs to 134 residues: D-ribose pyranase (134 aa).

The active-site Proton donor is H20. Substrate contacts are provided by residues D28, H99, and 123 to 125 (YSN).

The protein belongs to the RbsD / FucU family. RbsD subfamily. In terms of assembly, homodecamer.

It is found in the cytoplasm. The catalysed reaction is beta-D-ribopyranose = beta-D-ribofuranose. The protein operates within carbohydrate metabolism; D-ribose degradation; D-ribose 5-phosphate from beta-D-ribopyranose: step 1/2. Functionally, catalyzes the interconversion of beta-pyran and beta-furan forms of D-ribose. The polypeptide is D-ribose pyranase (Staphylococcus aureus (strain Mu3 / ATCC 700698)).